A 529-amino-acid polypeptide reads, in one-letter code: DEP domain-containing protein 1B (529 aa).

A DEP domain is found at Phe-24 to Pro-108. Ser-160 carries the phosphoserine modification. In terms of domain architecture, Rho-GAP spans Asp-201–Leu-393. At Ser-436 the chain carries Phosphoserine.

In Mus musculus (Mouse), this protein is DEP domain-containing protein 1B (Depdc1b).